The primary structure comprises 230 residues: Ribonuclease 1 (230 aa).

The first 22 residues, Met-1–Ser-22, serve as a signal peptide directing secretion. Position 38 (Gln-38) interacts with RNA. A disulfide bond links Cys-44 and Cys-50. Residues His-65, Phe-115, His-118 to Glu-119, and Lys-122 to His-123 each bind RNA. Residue His-65 is the Proton donor of the active site. Intrachain disulfides connect Cys-80/Cys-126, Cys-186/Cys-221, and Cys-202/Cys-213. The active site involves Glu-119. Catalysis depends on His-123, which acts as the Proton acceptor.

It belongs to the RNase T2 family.

The enzyme catalyses a ribonucleotidyl-ribonucleotide-RNA + H2O = a 3'-end 3'-phospho-ribonucleotide-RNA + a 5'-end dephospho-ribonucleoside-RNA + H(+). Its function is as follows. May remobilize phosphate, particularly when cells senesce or when phosphate becomes limiting. The sequence is that of Ribonuclease 1 (RNS1) from Arabidopsis thaliana (Mouse-ear cress).